The chain runs to 261 residues: Cytochrome c oxidase subunit 3 (261 aa).

At 1–15 (MTHQTHAYHMVNPSP) the chain is on the mitochondrial matrix side. Residues 16-34 (WPLTGALSALLMTSGLAMW) traverse the membrane as a helical segment. Topologically, residues 35–40 (FHFNSV) are mitochondrial intermembrane. Residues 41–66 (TLLTLGLTTNMLTMYQWWRDIIREST) traverse the membrane as a helical segment. At 67-72 (FQGHHT) the chain is on the mitochondrial matrix side. A helical membrane pass occupies residues 73 to 105 (PTVQKGLRYGMILFIISEVLFFTGFFWAFYHSS). The Mitochondrial intermembrane portion of the chain corresponds to 106 to 128 (LAPTPELGGCWPPTGISPLNPLE). A helical transmembrane segment spans residues 129-152 (VPLLNTSVLLASGVSITWAHHSLM). The Mitochondrial matrix portion of the chain corresponds to 153–155 (EGN). Residues 156–183 (RNHMLQALFITIALGVYFTLLQASEYYE) traverse the membrane as a helical segment. Topologically, residues 184–190 (APFTISD) are mitochondrial intermembrane. The helical transmembrane segment at 191-223 (GIYGSTFFVATGFHGLHVIIGSTFLIVCFFRQL) threads the bilayer. The Mitochondrial matrix segment spans residues 224-232 (KFHFTSNHH). The helical transmembrane segment at 233–256 (FGFEAAAWYWHFVDVVWLFLYVSI) threads the bilayer. The Mitochondrial intermembrane segment spans residues 257-261 (YWWGS).

This sequence belongs to the cytochrome c oxidase subunit 3 family. Component of the cytochrome c oxidase (complex IV, CIV), a multisubunit enzyme composed of 14 subunits. The complex is composed of a catalytic core of 3 subunits MT-CO1, MT-CO2 and MT-CO3, encoded in the mitochondrial DNA, and 11 supernumerary subunits COX4I, COX5A, COX5B, COX6A, COX6B, COX6C, COX7A, COX7B, COX7C, COX8 and NDUFA4, which are encoded in the nuclear genome. The complex exists as a monomer or a dimer and forms supercomplexes (SCs) in the inner mitochondrial membrane with NADH-ubiquinone oxidoreductase (complex I, CI) and ubiquinol-cytochrome c oxidoreductase (cytochrome b-c1 complex, complex III, CIII), resulting in different assemblies (supercomplex SCI(1)III(2)IV(1) and megacomplex MCI(2)III(2)IV(2)).

The protein localises to the mitochondrion inner membrane. It catalyses the reaction 4 Fe(II)-[cytochrome c] + O2 + 8 H(+)(in) = 4 Fe(III)-[cytochrome c] + 2 H2O + 4 H(+)(out). Its function is as follows. Component of the cytochrome c oxidase, the last enzyme in the mitochondrial electron transport chain which drives oxidative phosphorylation. The respiratory chain contains 3 multisubunit complexes succinate dehydrogenase (complex II, CII), ubiquinol-cytochrome c oxidoreductase (cytochrome b-c1 complex, complex III, CIII) and cytochrome c oxidase (complex IV, CIV), that cooperate to transfer electrons derived from NADH and succinate to molecular oxygen, creating an electrochemical gradient over the inner membrane that drives transmembrane transport and the ATP synthase. Cytochrome c oxidase is the component of the respiratory chain that catalyzes the reduction of oxygen to water. Electrons originating from reduced cytochrome c in the intermembrane space (IMS) are transferred via the dinuclear copper A center (CU(A)) of subunit 2 and heme A of subunit 1 to the active site in subunit 1, a binuclear center (BNC) formed by heme A3 and copper B (CU(B)). The BNC reduces molecular oxygen to 2 water molecules using 4 electrons from cytochrome c in the IMS and 4 protons from the mitochondrial matrix. This chain is Cytochrome c oxidase subunit 3 (MT-CO3), found in Neotragus moschatus (Suni).